We begin with the raw amino-acid sequence, 377 residues long: tRNA(Met) cytidine acetate ligase (377 aa).

ATP contacts are provided by residues Ile7–His20, Gly100, Asn153, and Arg178.

It belongs to the TmcAL family.

The protein resides in the cytoplasm. The catalysed reaction is cytidine(34) in elongator tRNA(Met) + acetate + ATP = N(4)-acetylcytidine(34) in elongator tRNA(Met) + AMP + diphosphate. In terms of biological role, catalyzes the formation of N(4)-acetylcytidine (ac(4)C) at the wobble position of elongator tRNA(Met), using acetate and ATP as substrates. First activates an acetate ion to form acetyladenylate (Ac-AMP) and then transfers the acetyl group to tRNA to form ac(4)C34. The chain is tRNA(Met) cytidine acetate ligase from Staphylococcus epidermidis (strain ATCC 35984 / DSM 28319 / BCRC 17069 / CCUG 31568 / BM 3577 / RP62A).